Reading from the N-terminus, the 518-residue chain is Cytochrome P450 82E3 (518 aa).

Residues 2 to 22 traverse the membrane as a helical segment; it reads VFPVEAIVGLVTFTFLFYFLW. Residue lysine 254 forms a Glycyl lysine isopeptide (Lys-Gly) (interchain with G-Cter in ubiquitin) linkage. Residue cysteine 458 coordinates heme.

Belongs to the cytochrome P450 family. CYP82E2 subfamily. It depends on heme as a cofactor. As to expression, expressed at low levels in green leaves.

The protein resides in the membrane. It participates in alkaloid biosynthesis; nicotine biosynthesis. No nicotine N-demethylase activity. The chain is Cytochrome P450 82E3 from Nicotiana tabacum (Common tobacco).